Here is a 341-residue protein sequence, read N- to C-terminus: Phosphate acyltransferase (341 aa).

Belongs to the PlsX family. In terms of assembly, homodimer. Probably interacts with PlsY.

The protein localises to the cytoplasm. It catalyses the reaction a fatty acyl-[ACP] + phosphate = an acyl phosphate + holo-[ACP]. It participates in lipid metabolism; phospholipid metabolism. Catalyzes the reversible formation of acyl-phosphate (acyl-PO(4)) from acyl-[acyl-carrier-protein] (acyl-ACP). This enzyme utilizes acyl-ACP as fatty acyl donor, but not acyl-CoA. In Pseudoalteromonas atlantica (strain T6c / ATCC BAA-1087), this protein is Phosphate acyltransferase.